Consider the following 226-residue polypeptide: UPF0758 protein Sca_1264 (226 aa).

Positions 102-224 constitute an MPN domain; it reads KITSPQDAAD…YLSMVEGGYF (123 aa). Zn(2+) contacts are provided by H173, H175, and D186. A JAMM motif motif is present at residues 173 to 186; sequence HNHPSGDVTPSKED.

Belongs to the UPF0758 family.

The chain is UPF0758 protein Sca_1264 from Staphylococcus carnosus (strain TM300).